Here is an 84-residue protein sequence, read N- to C-terminus: Large ribosomal subunit protein bL27 (84 aa).

The segment at 1–24 (MAHKKGAASTKNGRDSNSQRLGVK) is disordered. Positions 9 to 20 (STKNGRDSNSQR) are enriched in polar residues.

This sequence belongs to the bacterial ribosomal protein bL27 family.

This Nocardioides sp. (strain ATCC BAA-499 / JS614) protein is Large ribosomal subunit protein bL27.